Consider the following 491-residue polypeptide: Anthranilate synthase component 1 (491 aa).

Residues S49 and 271-273 (PYL) each bind L-tryptophan. 306 to 307 (GT) is a chorismate binding site. Mg(2+) is bound at residue E333. Chorismate contacts are provided by residues Y421, R441, 455-457 (GAG), and G457. E470 contributes to the Mg(2+) binding site.

It belongs to the anthranilate synthase component I family. In terms of assembly, heterotetramer consisting of two non-identical subunits: a beta subunit (TrpG) and a large alpha subunit (TrpE). The cofactor is Mg(2+).

The enzyme catalyses chorismate + L-glutamine = anthranilate + pyruvate + L-glutamate + H(+). It participates in amino-acid biosynthesis; L-tryptophan biosynthesis; L-tryptophan from chorismate: step 1/5. With respect to regulation, feedback inhibited by tryptophan. Part of a heterotetrameric complex that catalyzes the two-step biosynthesis of anthranilate, an intermediate in the biosynthesis of L-tryptophan. In the first step, the glutamine-binding beta subunit (TrpG) of anthranilate synthase (AS) provides the glutamine amidotransferase activity which generates ammonia as a substrate that, along with chorismate, is used in the second step, catalyzed by the large alpha subunit of AS (TrpE) to produce anthranilate. In the absence of TrpG, TrpE can synthesize anthranilate directly from chorismate and high concentrations of ammonia. This is Anthranilate synthase component 1 (trpE) from Neisseria meningitidis serogroup A / serotype 4A (strain DSM 15465 / Z2491).